We begin with the raw amino-acid sequence, 480 residues long: Glycogen synthase (480 aa).

Position 15 (Lys15) interacts with ADP-alpha-D-glucose.

The protein belongs to the glycosyltransferase 1 family. Bacterial/plant glycogen synthase subfamily.

It catalyses the reaction [(1-&gt;4)-alpha-D-glucosyl](n) + ADP-alpha-D-glucose = [(1-&gt;4)-alpha-D-glucosyl](n+1) + ADP + H(+). Its pathway is glycan biosynthesis; glycogen biosynthesis. Its function is as follows. Synthesizes alpha-1,4-glucan chains using ADP-glucose. This is Glycogen synthase from Pasteurella multocida (strain Pm70).